The following is a 177-amino-acid chain: Transmembrane protein 196 (177 aa).

The next 4 membrane-spanning stretches (helical) occupy residues 11–31 (LLVLSVLEIGLGLSSVAVGAV), 47–67 (SSPVWSGACFLICGVCGIFCA), 73–93 (LIMILFSACCICGLIGGILNI), and 106–126 (LYSLYLASMSLACIGISGCTI). The segment covering 152-162 (HSHEMTEKDTE) has biased composition (basic and acidic residues). Residues 152-177 (HSHEMTEKDTENITNGGGPLALNGRV) form a disordered region.

The protein resides in the cytoplasm. The protein localises to the membrane. The protein is Transmembrane protein 196 (tmem196) of Xenopus tropicalis (Western clawed frog).